The following is a 610-amino-acid chain: Oxidoreductase ptaE (610 aa).

The signal sequence occupies residues 1-20 (MFQSILFLAFYGRPVFGSAA). Plastocyanin-like domains follow at residues 67 to 181 (QIIS…HGPS) and 191 to 344 (PWLL…IVRY). N-linked (GlcNAc...) asparagine glycans are attached at residues N105, N111, N262, N277, N330, N356, N401, N409, N427, and N602. The 144-residue stretch at 425-568 (YVNWSEPSVK…IAIQFLEQPS (144 aa)) folds into the Plastocyanin-like 3 domain.

This sequence belongs to the multicopper oxidase family.

Its pathway is secondary metabolite biosynthesis. Its function is as follows. Oxidoreductase; part of the gene cluster that mediates the biosynthesis of pestheic acid, a diphenyl ether which is a biosynthetic precursor of the unique chloropupukeananes. The biosynthesis initiates from condensation of acetate and malonate units catalyzed by the non-reducing PKS ptaA. As the ptaA protein is TE/CLC domain-deficient, hydrolysis and Claisen cyclization of the polyketide could be catalyzed by ptaB containing a beta-lactamase domain. The ptaB protein might hydrolyze the thioester bond between the ACP of ptaA and the intermediate to release atrochrysone carboxylic acid, which is spontaneously dehydrated to form endocrocin anthrone. Endocrocin anthrone is then converted to endocrocin, catalyzed by the anthrone oxygenase ptaC. Spontaneous decarboxylation of endocrocin occurs to generate emodin. An O-methyltransferase (ptaH or ptaI) could methylate emodin to form physcion. PtaJ could then catalyze the oxidative cleavage of physcion, and rotation of the intermediate could then afford desmethylisosulochrin. PtaF, a putative NADH-dependent oxidoreductase, might also participate in the oxidative cleavage step. Desmethylisosulochrin is then transformed by another O-methyltransferase (ptaH or ptaI) to form isosulochrin. Chlorination of isosulochrin by ptaM in the cyclohexadienone B ring then produces chloroisosulochrin. PtaE is responsible for the oxidative coupling reactions of both benzophenones isosulouchrin and chloroisosulochrin to RES-1214-1 and pestheic acid respectively, regardless of chlorination. This Pestalotiopsis fici (strain W106-1 / CGMCC3.15140) protein is Oxidoreductase ptaE.